The chain runs to 255 residues: tRNA (guanine-N(1)-)-methyltransferase (255 aa).

Residues G117 and 137-142 contribute to the S-adenosyl-L-methionine site; that span reads LGDFVL.

The protein belongs to the RNA methyltransferase TrmD family. In terms of assembly, homodimer.

The protein resides in the cytoplasm. It catalyses the reaction guanosine(37) in tRNA + S-adenosyl-L-methionine = N(1)-methylguanosine(37) in tRNA + S-adenosyl-L-homocysteine + H(+). In terms of biological role, specifically methylates guanosine-37 in various tRNAs. The chain is tRNA (guanine-N(1)-)-methyltransferase from Paracidovorax citrulli (strain AAC00-1) (Acidovorax citrulli).